Here is a 1577-residue protein sequence, read N- to C-terminus: Pentafunctional AROM polypeptide (1577 aa).

Positions 1–384 (MSMKMADPTK…YEPKASVVSN (384 aa)) are 3-dehydroquinate synthase. Residues 48-50 (DTN), 85-88 (ENSK), 116-118 (GGV), and D121 each bind NAD(+). Residue R132 participates in 7-phospho-2-dehydro-3-deoxy-D-arabino-heptonate binding. 141 to 142 (TT) provides a ligand contact to NAD(+). Residues D148 and K154 each coordinate 7-phospho-2-dehydro-3-deoxy-D-arabino-heptonate. NAD(+) is bound at residue K163. Residue N164 participates in 7-phospho-2-dehydro-3-deoxy-D-arabino-heptonate binding. Residues 181-184 (FIDT) and N192 each bind NAD(+). Residue E196 coordinates Zn(2+). 7-phospho-2-dehydro-3-deoxy-D-arabino-heptonate contacts are provided by residues 196–199 (EVIK) and K250. E260 functions as the Proton acceptor; for 3-dehydroquinate synthase activity in the catalytic mechanism. 7-phospho-2-dehydro-3-deoxy-D-arabino-heptonate is bound by residues 264-268 (RNLLN) and H271. H271 is a Zn(2+) binding site. The active-site Proton acceptor; for 3-dehydroquinate synthase activity is the H275. 7-phospho-2-dehydro-3-deoxy-D-arabino-heptonate is bound by residues H287 and K356. H287 lines the Zn(2+) pocket. Residues 397-842 (VIPGVPKSLN…WDALKQKFGV (446 aa)) are EPSP synthase. Catalysis depends on C824, which acts as the For EPSP synthase activity. The interval 864–1056 (NASVIIIGMR…RKKRLSFFVS (193 aa)) is shikimate kinase. 871–878 (GMRGAGKT) serves as a coordination point for ATP. The tract at residues 1057 to 1277 (LTLPDLRDTG…AAPGQLSAAE (221 aa)) is 3-dehydroquinase. The Proton acceptor; for 3-dehydroquinate dehydratase activity role is filled by H1180. The active-site Schiff-base intermediate with substrate; for 3-dehydroquinate dehydratase activity is the K1208. The shikimate dehydrogenase stretch occupies residues 1290 to 1577 (AKKFAIFGKP…RNAVLGTNEK (288 aa)).

In the N-terminal section; belongs to the sugar phosphate cyclases superfamily. Dehydroquinate synthase family. This sequence in the 2nd section; belongs to the EPSP synthase family. It in the 3rd section; belongs to the shikimate kinase family. The protein in the 4th section; belongs to the type-I 3-dehydroquinase family. In the C-terminal section; belongs to the shikimate dehydrogenase family. In terms of assembly, homodimer. Zn(2+) serves as cofactor.

It is found in the cytoplasm. It carries out the reaction 7-phospho-2-dehydro-3-deoxy-D-arabino-heptonate = 3-dehydroquinate + phosphate. The catalysed reaction is 3-dehydroquinate = 3-dehydroshikimate + H2O. The enzyme catalyses shikimate + NADP(+) = 3-dehydroshikimate + NADPH + H(+). It catalyses the reaction shikimate + ATP = 3-phosphoshikimate + ADP + H(+). It carries out the reaction 3-phosphoshikimate + phosphoenolpyruvate = 5-O-(1-carboxyvinyl)-3-phosphoshikimate + phosphate. It functions in the pathway metabolic intermediate biosynthesis; chorismate biosynthesis; chorismate from D-erythrose 4-phosphate and phosphoenolpyruvate: step 2/7. It participates in metabolic intermediate biosynthesis; chorismate biosynthesis; chorismate from D-erythrose 4-phosphate and phosphoenolpyruvate: step 3/7. The protein operates within metabolic intermediate biosynthesis; chorismate biosynthesis; chorismate from D-erythrose 4-phosphate and phosphoenolpyruvate: step 4/7. Its pathway is metabolic intermediate biosynthesis; chorismate biosynthesis; chorismate from D-erythrose 4-phosphate and phosphoenolpyruvate: step 5/7. It functions in the pathway metabolic intermediate biosynthesis; chorismate biosynthesis; chorismate from D-erythrose 4-phosphate and phosphoenolpyruvate: step 6/7. In terms of biological role, the AROM polypeptide catalyzes 5 consecutive enzymatic reactions in prechorismate polyaromatic amino acid biosynthesis. This Talaromyces stipitatus (strain ATCC 10500 / CBS 375.48 / QM 6759 / NRRL 1006) (Penicillium stipitatum) protein is Pentafunctional AROM polypeptide.